We begin with the raw amino-acid sequence, 711 residues long: Interferon-induced GTP-binding protein Mx2 (711 aa).

Positions aspartate 115–proline 387 constitute a Dynamin-type G domain. The interval glycine 125–serine 132 is G1 motif. Residue glycine 125–serine 132 participates in GTP binding. The G2 motif stretch occupies residues valine 150 to arginine 152. Positions aspartate 225–glycine 228 are G3 motif. GTP is bound by residues aspartate 225–isoleucine 229 and threonine 294–aspartate 297. Positions threonine 294–aspartate 297 are G4 motif. Residues arginine 326–glycine 329 form a G5 motif region. The GED domain occupies asparagine 623–serine 711.

Belongs to the TRAFAC class dynamin-like GTPase superfamily. Dynamin/Fzo/YdjA family.

It localises to the cytoplasm. It is found in the nucleus. Interferon-induced dynamin-like GTPase with antiviral activity against vesicular stomatitis virus (VSV). This is Interferon-induced GTP-binding protein Mx2 (MX2) from Canis lupus familiaris (Dog).